A 357-amino-acid polypeptide reads, in one-letter code: Prostaglandin E2 receptor EP2 subtype (357 aa).

The Extracellular segment spans residues 1-24 (MDNSFNDSRRVENCESRQYLLSDE). A glycan (N-linked (GlcNAc...) asparagine) is linked at Asn6. Residues 25–48 (SPAISSVMFTAGVLGNLIALALLA) traverse the membrane as a helical segment. The Cytoplasmic segment spans residues 49–66 (RRWRGDTGCSAGSRTSIS). Residues 67–92 (LFHVLVTELVLTDLLGTCLISPVVLA) traverse the membrane as a helical segment. At 93 to 112 (SYSRNQTLVALAPESRACTY) the chain is on the extracellular side. A disulfide bridge connects residues Cys110 and Cys188. Residues 113–133 (FAFTMTFFSLATMLMLFAMAL) form a helical membrane-spanning segment. Topologically, residues 134–152 (ERYLAIGHPYFYRRRVSRR) are cytoplasmic. The helical transmembrane segment at 153-177 (GGLAVLPAIYGVSLLFCSLPLLNYG) threads the bilayer. Residues 178-199 (EYVQYCPGTWCFIQHGRTAYLQ) are Extracellular-facing. A helical transmembrane segment spans residues 200-224 (LYATVLLLLIVAVLGCNISVILNLI). Residues 225 to 262 (RMQLRSKRSRCGLSGSSLRGPGSRRRGERTSMAEETDH) lie on the Cytoplasmic side of the membrane. Residues 235 to 245 (CGLSGSSLRGP) are compositionally biased toward low complexity. The disordered stretch occupies residues 235–255 (CGLSGSSLRGPGSRRRGERTS). A helical membrane pass occupies residues 263–286 (LILLAIMTITFAVCSLPFTIFAYM). Residues 287-299 (DETSSRKEKWDLR) lie on the Extracellular side of the membrane. A helical membrane pass occupies residues 300 to 323 (ALRFLSVNSIIDPWVFVILRPPVL). The Cytoplasmic segment spans residues 324–357 (RLMRSVLCCRTSLRAPEAPGASCSTQQTDLCGQL).

The protein belongs to the G-protein coupled receptor 1 family.

It localises to the cell membrane. Its function is as follows. Receptor for prostaglandin E2 (PGE2). The activity of this receptor is mediated by G(s) proteins that stimulate adenylate cyclase. The subsequent raise in intracellular cAMP is responsible for the relaxing effect of this receptor on smooth muscle. This chain is Prostaglandin E2 receptor EP2 subtype (Ptger2), found in Rattus norvegicus (Rat).